A 223-amino-acid polypeptide reads, in one-letter code: Membrane-associated progesterone receptor component 2 (223 aa).

The disordered stretch occupies residues 1–33; sequence MAAGDGDVKLGTLGSGSESSNDGGSESPGDAGA. O-linked (Xyl...) (chondroitin sulfate) serine glycosylation occurs at S15. The segment covering 15–33 has biased composition (low complexity); it reads SGSESSNDGGSESPGDAGA. A helical membrane pass occupies residues 42–66; it reads AAALALLTGGGEMLLNVALVALVLL. S90, S104, and S208 each carry phosphoserine. One can recognise a Cytochrome b5 heme-binding domain in the interval 102–201; the sequence is DFSLEQLRQY…EKYDYVGRLL (100 aa). Residues 202 to 223 form a disordered region; the sequence is KPGEEPSEYTDEEDTKDHNKQD. Acidic residues predominate over residues 206–215; it reads EPSEYTDEED. At Y210 the chain carries Phosphotyrosine. A Phosphothreonine modification is found at T211.

Belongs to the cytochrome b5 family. MAPR subfamily. As to quaternary structure, interacts with PGRMC1. Interacts with AAAS. In terms of tissue distribution, expressed by endometrial glands and stroma (at protein level). Detected in urine (at protein level).

It is found in the membrane. The protein resides in the nucleus envelope. It localises to the endoplasmic reticulum. Its subcellular location is the secreted. Required for the maintenance of uterine histoarchitecture and normal female reproductive lifespan. May serve as a universal non-classical progesterone receptor in the uterus. Intracellular heme chaperone required for delivery of labile, or signaling heme, to the nucleus. Plays a role in adipocyte function and systemic glucose homeostasis. In brown fat, which has a high demand for heme, delivery of labile heme in the nucleus regulates the activity of heme-responsive transcriptional repressors such as NR1D1 and BACH1. The sequence is that of Membrane-associated progesterone receptor component 2 from Homo sapiens (Human).